Consider the following 63-residue polypeptide: Conotoxin PnMRCL-0111 (63 aa).

The N-terminal stretch at M1–A22 is a signal peptide. A propeptide spanning residues Q23–R50 is cleaved from the precursor. W62 is subject to Tryptophan amide.

Belongs to the conotoxin T superfamily. Post-translationally, contains 2 disulfide bonds that can be either 'C1-C3, C2-C4' or 'C1-C4, C2-C3', since these disulfide connectivities have been observed for conotoxins with cysteine framework V (for examples, see AC P0DQQ7 and AC P81755). As to expression, expressed by the venom duct.

The protein resides in the secreted. The chain is Conotoxin PnMRCL-0111 from Conus pennaceus (Feathered cone).